A 276-amino-acid polypeptide reads, in one-letter code: Triple specificity protein phosphatase PtpB (276 aa).

C160 functions as the Phosphocysteine intermediate in the catalytic mechanism. The tract at residues 232–250 is UIM-like region; that stretch reads LGVRAEYLAAARQTIDETY.

It belongs to the protein-tyrosine phosphatase family. In terms of assembly, interacts (via UIM-like region) with host ubiquitin; activating the phosphatidylinositol phosphate phosphatase activity.

Its subcellular location is the secreted. The protein resides in the host cytoplasm. It localises to the host cell membrane. It catalyses the reaction O-phospho-L-tyrosyl-[protein] + H2O = L-tyrosyl-[protein] + phosphate. The catalysed reaction is O-phospho-L-seryl-[protein] + H2O = L-seryl-[protein] + phosphate. The enzyme catalyses O-phospho-L-threonyl-[protein] + H2O = L-threonyl-[protein] + phosphate. It carries out the reaction 1,2-dioctanoyl-sn-glycero-3-phospho-(1-D-myo-inositol-3-phosphate) + H2O = 1,2-dioctanoyl-sn-glycero-3-phospho-(1D-myo-inositol) + phosphate. It catalyses the reaction 1,2-dioctanoyl-sn-glycero-3-phospho-(1-D-myo-inositol-4-phosphate) + H2O = 1,2-dioctanoyl-sn-glycero-3-phospho-(1D-myo-inositol) + phosphate. The catalysed reaction is 1,2-dioctanoyl-sn-glycero-3-phospho-(1D-myo-inositol-5-phosphate) + H2O = 1,2-dioctanoyl-sn-glycero-3-phospho-(1D-myo-inositol) + phosphate. Binding to host ubiquitin is required to activate the phosphatidylinositol phosphate phosphatase activity. Phosphatase activity is inhibited by sodium orthovanadate, a specific inhibitor of tyrosine phosphatases, but not by okadaic acid, an inhibitor of serine/threonine phosphatases. Inhibition of the enzyme reduces mycobacterial survival in infected macrophages. Inhibitors also enhance killing efficacy by first-line antibiotics. Its function is as follows. Essential virulence factor that promotes mycobacterial survival within host macrophages. Acts as a phosphatase that possesses triple substrate specificity toward phosphotyrosine, phosphoserine/threonine and phosphoinositides. Supports mycobacteria survival during infection by modulating the normal host signaling pathways, attenuating the bactericidal immune responses and promoting the host cell survival. Inhibits host pyroptosis by disrupting the membrane localization of host gasdermin-D (GSDMD): acts by catalyzing dephosphorylation of phosphatidylinositol (4,5)-bisphosphate and phosphatidylinositol 4-phosphate, thereby inhibiting the membrane targeting of GSDMD and subsequent cytokine release and pyroptosis. Inhibits host inflammatory responses and apoptosis through impeding the NF-kappa-B and MAPK signal pathways and TP53/p53 expression in the macrophage. Blocks the IL6/IL-6 production by down-regulating ERK1/2, p38 and p65 activity. Prevents macrophage cell death by activating the Akt pathway and blocking caspase 3 activity. Reduces the expression of iNOS in activated macrophages and inhibits the generation of destroying reactive nitrogen intermediate NO. The chain is Triple specificity protein phosphatase PtpB from Mycobacterium tuberculosis (strain ATCC 25618 / H37Rv).